The following is a 196-amino-acid chain: dTTP/UTP pyrophosphatase (196 aa).

Asp-78 serves as the catalytic Proton acceptor.

It belongs to the Maf family. YhdE subfamily. A divalent metal cation serves as cofactor.

Its subcellular location is the cytoplasm. It catalyses the reaction dTTP + H2O = dTMP + diphosphate + H(+). The enzyme catalyses UTP + H2O = UMP + diphosphate + H(+). Functionally, nucleoside triphosphate pyrophosphatase that hydrolyzes dTTP and UTP. May have a dual role in cell division arrest and in preventing the incorporation of modified nucleotides into cellular nucleic acids. In Photobacterium profundum (strain SS9), this protein is dTTP/UTP pyrophosphatase.